The sequence spans 633 residues: Extracellular metalloproteinase 5 (633 aa).

The N-terminal stretch at 1–21 (MHGLLLAAAGLLSLPLHVVAH) is a signal peptide. A propeptide spanning residues 22-245 (PQPSTSLAGR…HNVVDYVSHA (224 aa)) is cleaved from the precursor. N-linked (GlcNAc...) asparagine glycosylation is present at N285. Residue H428 coordinates Zn(2+). The active site involves E429. H432 contributes to the Zn(2+) binding site. 2 N-linked (GlcNAc...) asparagine glycosylation sites follow: N592 and N621.

Belongs to the peptidase M36 family. Requires Zn(2+) as cofactor.

It is found in the secreted. Secreted metalloproteinase probably acting as a virulence factor. This Trichophyton rubrum (Athlete's foot fungus) protein is Extracellular metalloproteinase 5 (MEP5).